We begin with the raw amino-acid sequence, 549 residues long: Cytoplasmic trehalase (549 aa).

Residues arginine 168, 175–176 (WD), asparagine 212, 221–223 (RSQ), 292–294 (RDE), and glycine 324 each bind substrate. Active-site proton donor/acceptor residues include aspartate 326 and glutamate 509. Residue glutamate 525 participates in substrate binding.

Belongs to the glycosyl hydrolase 37 family. In terms of assembly, monomer.

Its subcellular location is the cytoplasm. It catalyses the reaction alpha,alpha-trehalose + H2O = alpha-D-glucose + beta-D-glucose. Its pathway is glycan degradation; trehalose degradation; D-glucose from alpha,alpha-trehalose: step 1/1. Its function is as follows. Hydrolyzes trehalose to glucose. Could be involved, in cells returning to low osmolarity conditions, in the utilization of the accumulated cytoplasmic trehalose, which was synthesized in response to high osmolarity. This chain is Cytoplasmic trehalase, found in Salmonella schwarzengrund (strain CVM19633).